Here is a 141-residue protein sequence, read N- to C-terminus: Nucleoside diphosphate kinase (141 aa).

6 residues coordinate ATP: lysine 11, phenylalanine 59, arginine 87, threonine 93, arginine 104, and asparagine 114. Histidine 117 acts as the Pros-phosphohistidine intermediate in catalysis.

The protein belongs to the NDK family. Homotetramer. The cofactor is Mg(2+).

It is found in the cytoplasm. The enzyme catalyses a 2'-deoxyribonucleoside 5'-diphosphate + ATP = a 2'-deoxyribonucleoside 5'-triphosphate + ADP. It catalyses the reaction a ribonucleoside 5'-diphosphate + ATP = a ribonucleoside 5'-triphosphate + ADP. In terms of biological role, major role in the synthesis of nucleoside triphosphates other than ATP. The ATP gamma phosphate is transferred to the NDP beta phosphate via a ping-pong mechanism, using a phosphorylated active-site intermediate. In Teredinibacter turnerae (strain ATCC 39867 / T7901), this protein is Nucleoside diphosphate kinase.